We begin with the raw amino-acid sequence, 314 residues long: Cyclin-dependent kinase 2 (314 aa).

The 280-residue stretch at 8-287 (FQRAEKIGEG…AKDALQHAYF (280 aa)) folds into the Protein kinase domain. Residues 14–22 (IGEGTYGIV) and K37 each bind ATP. At T18 the chain carries Phosphothreonine. Y19 carries the post-translational modification Phosphotyrosine. Catalysis depends on D130, which acts as the Proton acceptor. The residue at position 162 (Y162) is a Phosphotyrosine. The residue at position 163 (T163) is a Phosphothreonine.

Belongs to the protein kinase superfamily. CMGC Ser/Thr protein kinase family. CDC2/CDKX subfamily. Interacts with cyclin CycG.

It catalyses the reaction L-seryl-[protein] + ATP = O-phospho-L-seryl-[protein] + ADP + H(+). The enzyme catalyses L-threonyl-[protein] + ATP = O-phospho-L-threonyl-[protein] + ADP + H(+). The catalysed reaction is [DNA-directed RNA polymerase] + ATP = phospho-[DNA-directed RNA polymerase] + ADP + H(+). Its function is as follows. Like Cdk1, could play a key role in the control of the eukaryotic cell cycle. The protein is Cyclin-dependent kinase 2 of Drosophila melanogaster (Fruit fly).